The primary structure comprises 81 residues: Photosystem I iron-sulfur center (81 aa).

4Fe-4S ferredoxin-type domains lie at 2–31 (SHSV…MVAW) and 39–68 (IASA…VRVY). [4Fe-4S] cluster is bound by residues Cys-11, Cys-14, Cys-17, Cys-21, Cys-48, Cys-51, Cys-54, and Cys-58.

In terms of assembly, the eukaryotic PSI reaction center is composed of at least 11 subunits. [4Fe-4S] cluster is required as a cofactor.

Its subcellular location is the plastid. The protein localises to the chloroplast thylakoid membrane. The catalysed reaction is reduced [plastocyanin] + hnu + oxidized [2Fe-2S]-[ferredoxin] = oxidized [plastocyanin] + reduced [2Fe-2S]-[ferredoxin]. Its function is as follows. Apoprotein for the two 4Fe-4S centers FA and FB of photosystem I (PSI); essential for photochemical activity. FB is the terminal electron acceptor of PSI, donating electrons to ferredoxin. The C-terminus interacts with PsaA/B/D and helps assemble the protein into the PSI complex. Required for binding of PsaD and PsaE to PSI. PSI is a plastocyanin/cytochrome c6-ferredoxin oxidoreductase, converting photonic excitation into a charge separation, which transfers an electron from the donor P700 chlorophyll pair to the spectroscopically characterized acceptors A0, A1, FX, FA and FB in turn. The polypeptide is Photosystem I iron-sulfur center (Guillardia theta (Cryptophyte)).